A 138-amino-acid chain; its full sequence is UPF0251 protein Dole_1957 (138 aa).

This sequence belongs to the UPF0251 family.

The sequence is that of UPF0251 protein Dole_1957 from Desulfosudis oleivorans (strain DSM 6200 / JCM 39069 / Hxd3) (Desulfococcus oleovorans).